We begin with the raw amino-acid sequence, 574 residues long: Calcium-dependent protein kinase 9 (574 aa).

The segment at 1–64 (MGNTCCVAPA…RARAKPNPYD (64 aa)) is disordered. Residue glycine 2 is the site of N-myristoyl glycine attachment. The span at 28–40 (KSPAPSATTTTAT) shows a compositional bias: low complexity. The region spanning 101 to 359 (YQLGRELGRG…AQQVLDHPWL (259 aa)) is the Protein kinase domain. ATP contacts are provided by residues 107 to 115 (LGRGEFGVT) and lysine 130. Catalysis depends on aspartate 225, which acts as the Proton acceptor. The interval 365-395 (APNVPLGDVVRARLKQFSLMNRLKKKAMRVI) is autoinhibitory domain. EF-hand domains are found at residues 402 to 437 (EEVEVIKDMFALMDTDNNGRVTLQELKDGLTKVGSK), 438 to 473 (LAEPEMELLMEAADVDGNGYLDYGEFVAVTIHLQRL), 474 to 509 (SNDNHLRTAFLFFDKDGSGYIDRAELADALADDSGH), and 510 to 545 (ADDAVLDHILREVDTDKDGRISYEEFVAMMKSGTDW). Aspartate 415, aspartate 417, asparagine 419, arginine 421, glutamate 426, aspartate 451, aspartate 453, asparagine 455, tyrosine 457, glutamate 462, aspartate 487, aspartate 489, serine 491, tyrosine 493, glutamate 498, aspartate 523, aspartate 525, aspartate 527, arginine 529, and glutamate 534 together coordinate Ca(2+).

It belongs to the protein kinase superfamily. Ser/Thr protein kinase family. CDPK subfamily. Expressed in leaf blades and stems. Expressed at low levels in anthers and spikelets.

It localises to the membrane. The catalysed reaction is L-seryl-[protein] + ATP = O-phospho-L-seryl-[protein] + ADP + H(+). The enzyme catalyses L-threonyl-[protein] + ATP = O-phospho-L-threonyl-[protein] + ADP + H(+). Its activity is regulated as follows. Activated by calcium. Autophosphorylation may play an important role in the regulation of the kinase activity. Functionally, may play a role in signal transduction pathways that involve calcium as a second messenger. Functions in signal transduction pathways that positively regulate responses to drought, osmotic, and dehydration stress. Regulates expression of stress-associated genes in response to drought. Involved in tolerance to drought stress by increasing proline and soluble sugars, and improving stomatal closure. Required for pollen maturation and spikelet fertility. The sequence is that of Calcium-dependent protein kinase 9 from Oryza sativa subsp. japonica (Rice).